The following is a 166-amino-acid chain: MNYGNNGGGQWQPRGNNNWRPQGRGRGGGGWKGNDNRGGYRGGSSNDGGWSNFRDDGNLNFASPYQANRGNFRGNYRGGGGGGGGNQNNYGNRGRGRGGFDRGRGGGGGGNKNFGPIDANKCIIPSMWNNPWDALEKEYEQEYGVAITEKVTDPSPSPSSAEETTA.

Gly residues-rich tracts occupy residues 1 to 10 and 76 to 86; these read MNYGNNGGGQ and YRGGGGGGGGN. The tract at residues 1–117 is disordered; sequence MNYGNNGGGQ…GGGNKNFGPI (117 aa).

This is an uncharacterized protein from Caenorhabditis elegans.